The chain runs to 701 residues: Glycine--tRNA ligase beta subunit (701 aa).

Belongs to the class-II aminoacyl-tRNA synthetase family. Tetramer of two alpha and two beta subunits.

Its subcellular location is the cytoplasm. It carries out the reaction tRNA(Gly) + glycine + ATP = glycyl-tRNA(Gly) + AMP + diphosphate. This is Glycine--tRNA ligase beta subunit from Bradyrhizobium sp. (strain BTAi1 / ATCC BAA-1182).